A 421-amino-acid polypeptide reads, in one-letter code: MTESVLDYMTRLGRAARQASRLIARASTAQKNRALLAAADALDASRSELTAANEQDLANGRANGLEPALLDRLALTPARIDDMIEGLRQVAKLPDPIGEIRDMRYLPSGIQVGKMRVPLGVIGIIYESRPNVTIDAASLCLKSGNATILRGGSEAINSNRAIAACIQQGLAVAELPAEVVQVVETTDRAAVGALITMPEFVDVIVPRGGKSLIERVSRDAKVPVIKHLDGVCHVFIDIAADIDKAIRIADNAKTHRYAPCNTMETLLVHVGIADRVLPPLAAIYRDKGVELRGCERTRALLGADVIEATELDWYTEYTAPILSIKIVDDLDEAIEHINTYGSKHTDAIVSEHFSDARRFLNEVDSASVMINASTRFADGFEYGLGAEIGISTDKLHARGPVGLEGLTSEKYVVFGDGHVRT.

It belongs to the gamma-glutamyl phosphate reductase family.

It is found in the cytoplasm. It catalyses the reaction L-glutamate 5-semialdehyde + phosphate + NADP(+) = L-glutamyl 5-phosphate + NADPH + H(+). It participates in amino-acid biosynthesis; L-proline biosynthesis; L-glutamate 5-semialdehyde from L-glutamate: step 2/2. Its function is as follows. Catalyzes the NADPH-dependent reduction of L-glutamate 5-phosphate into L-glutamate 5-semialdehyde and phosphate. The product spontaneously undergoes cyclization to form 1-pyrroline-5-carboxylate. This Pseudomonas fluorescens (strain SBW25) protein is Gamma-glutamyl phosphate reductase.